The following is a 317-amino-acid chain: tRNA dimethylallyltransferase (317 aa).

Position 14 to 21 (14 to 21) interacts with ATP; sequence GPTASGKS. 16-21 provides a ligand contact to substrate; that stretch reads TASGKS. Interaction with substrate tRNA stretches follow at residues 39-42 and 163-167; these read DSVL and QRIQR.

It belongs to the IPP transferase family. Monomer. Mg(2+) serves as cofactor.

The catalysed reaction is adenosine(37) in tRNA + dimethylallyl diphosphate = N(6)-dimethylallyladenosine(37) in tRNA + diphosphate. Functionally, catalyzes the transfer of a dimethylallyl group onto the adenine at position 37 in tRNAs that read codons beginning with uridine, leading to the formation of N6-(dimethylallyl)adenosine (i(6)A). The sequence is that of tRNA dimethylallyltransferase from Xylella fastidiosa (strain M12).